The chain runs to 297 residues: Homoserine kinase (297 aa).

82-92 (PLTRGLGSSAS) is an ATP binding site.

It belongs to the GHMP kinase family. Homoserine kinase subfamily.

The protein localises to the cytoplasm. The enzyme catalyses L-homoserine + ATP = O-phospho-L-homoserine + ADP + H(+). The protein operates within amino-acid biosynthesis; L-threonine biosynthesis; L-threonine from L-aspartate: step 4/5. In terms of biological role, catalyzes the ATP-dependent phosphorylation of L-homoserine to L-homoserine phosphate. The protein is Homoserine kinase of Bacillus cereus (strain ZK / E33L).